Here is a 422-residue protein sequence, read N- to C-terminus: Inhibitory synaptic factor 2A (422 aa).

The disordered stretch occupies residues 143–163 (FLADSKEKSEAGPMEEPRPCS). Over residues 146-160 (DSKEKSEAGPMEEPR) the composition is skewed to basic and acidic residues. Phosphoserine is present on Ser-177. Positions 344-370 (TEVVDLKAQLQVMENLISSSQETIKVL) form a coiled coil.

Belongs to the INSYN2 family. Interacts with GPHN.

It localises to the postsynaptic density. Component of the protein machinery at the inhibitory synapses, probably acting as a scaffold. Inhibitory synapses dampen neuronal activity through postsynaptic hyperpolarization. This synaptic inhibition is fundamental for the functioning of the central nervous system, shaping and orchestrating the flow of information through neuronal networks to generate a precise neural code. This chain is Inhibitory synaptic factor 2A, found in Mus musculus (Mouse).